Here is a 774-residue protein sequence, read N- to C-terminus: E3 ubiquitin-protein ligase RFWD3 (774 aa).

2 disordered regions span residues 32-126 (GTIE…TAGA) and 203-281 (PYPL…SAME). Phosphoserine; by ATM and ATR occurs at positions 59 and 75. The segment covering 92–103 (LTEEVQPSEENM) has biased composition (acidic residues). Residues 108–121 (PGTSEEPSQGSGAN) show a composition bias toward polar residues. Positions 223–242 (SDSDGSAEDEEVVVQAEEPE) are enriched in acidic residues. An RING-type; degenerate zinc finger spans residues 288–332 (CTICLEQWTNAGDHRISALRCGHLFGFRCISKWLKGQTRKCPQCN). Residues 358-403 (RMKSDLLNEQMLRKQAELESAQCRLQLQVLIDKCTKLNSRVQDLEK) adopt a coiled-coil conformation. WD repeat units lie at residues 493 to 535 (IPMH…VVQT), 536 to 568 (YNTGRPVWSCCWCLDENNYVYAGLASGSILIYD), and 583 to 628 (KARC…SHKP).

As to quaternary structure, interacts with MDM2 and p53/TP53. Binds to the RPA complex via direct interaction with RPA2. Interacts with RAD51. Phosphorylated at Ser-59 and Ser-75 upon DNA damage by ATM or ATR. ATM phosphorylation occurs at early times upon DNA damage, while ATR is the major kinase at later times. Phosphorylation by ATM and ATR is required to stabilize p53/TP53. Part of the phosphorylation depends upon RPA2 presence.

The protein resides in the nucleus. It is found in the PML body. The protein localises to the cytoplasm. It catalyses the reaction S-ubiquitinyl-[E2 ubiquitin-conjugating enzyme]-L-cysteine + [acceptor protein]-L-lysine = [E2 ubiquitin-conjugating enzyme]-L-cysteine + N(6)-ubiquitinyl-[acceptor protein]-L-lysine.. It functions in the pathway protein modification; protein ubiquitination. Its function is as follows. E3 ubiquitin-protein ligase required for the repair of DNA interstrand cross-links (ICL) in response to DNA damage. Plays a key role in RPA-mediated DNA damage signaling and repair. Acts by mediating ubiquitination of the RPA complex (RPA1, RPA2 and RPA3 subunits) and RAD51 at stalled replication forks, leading to remove them from DNA damage sites and promote homologous recombination. Also mediates the ubiquitination of p53/TP53 in the late response to DNA damage, and acts as a positive regulator of p53/TP53 stability, thereby regulating the G1/S DNA damage checkpoint. May act by catalyzing the formation of short polyubiquitin chains on p53/TP53 that are not targeted to the proteasome. In response to ionizing radiation, interacts with MDM2 and enhances p53/TP53 ubiquitination, possibly by restricting MDM2 from extending polyubiquitin chains on ubiquitinated p53/TP53. Required to translesion DNA synthesis across DNA-protein cross-link adducts by catalyzing ubiquitination of proteins on single-stranded DNA (ssDNA). The sequence is that of E3 ubiquitin-protein ligase RFWD3 (Rfwd3) from Mus musculus (Mouse).